The chain runs to 111 residues: uncharacterized protein (111 aa).

Transmembrane regions (helical) follow at residues 4 to 22, 49 to 71, and 91 to 108; these read FWILMLIAITISLASQFFI, LLILFVFSLSFFPVEYLLLLFFI, and YMYHIVEVSLMFMLLIYV.

It localises to the cell membrane. This is an uncharacterized protein from Bacillus subtilis (strain 168).